The primary structure comprises 265 residues: Type III pantothenate kinase (265 aa).

ATP is bound at residue D6–V13. G112–R115 serves as a coordination point for substrate. The active-site Proton acceptor is D114. Residue D134 coordinates K(+). An ATP-binding site is contributed by T137. T189 serves as a coordination point for substrate.

This sequence belongs to the type III pantothenate kinase family. Homodimer. NH4(+) serves as cofactor. The cofactor is K(+).

The protein resides in the cytoplasm. The enzyme catalyses (R)-pantothenate + ATP = (R)-4'-phosphopantothenate + ADP + H(+). The protein operates within cofactor biosynthesis; coenzyme A biosynthesis; CoA from (R)-pantothenate: step 1/5. Its function is as follows. Catalyzes the phosphorylation of pantothenate (Pan), the first step in CoA biosynthesis. In Streptomyces coelicolor (strain ATCC BAA-471 / A3(2) / M145), this protein is Type III pantothenate kinase.